The sequence spans 231 residues: AA9 family lytic polysaccharide monooxygenase F (231 aa).

A signal peptide spans 1 to 17 (MLPSISLLLAAALGTSA). Histidine 18, aspartate 50, and histidine 89 together coordinate Cu(2+). Aspartate 50 contributes to the O2 binding site. 2 disulfides stabilise this stretch: cysteine 59–cysteine 177 and cysteine 147–cysteine 231. O2 contacts are provided by histidine 163 and glutamine 172. Tyrosine 174 contributes to the Cu(2+) binding site.

Belongs to the polysaccharide monooxygenase AA9 family. Requires Cu(2+) as cofactor.

The protein resides in the secreted. It catalyses the reaction [(1-&gt;4)-beta-D-glucosyl]n+m + reduced acceptor + O2 = 4-dehydro-beta-D-glucosyl-[(1-&gt;4)-beta-D-glucosyl]n-1 + [(1-&gt;4)-beta-D-glucosyl]m + acceptor + H2O.. In terms of biological role, lytic polysaccharide monooxygenase (LPMO) that depolymerizes crystalline and amorphous polysaccharides via the oxidation of scissile alpha- or beta-(1-4)-glycosidic bonds, yielding C1 oxidation products. Catalysis by LPMOs requires the reduction of the active-site copper from Cu(II) to Cu(I) by a reducing agent and H(2)O(2) or O(2) as a cosubstrate. The protein is AA9 family lytic polysaccharide monooxygenase F (gh61-6) of Neurospora crassa (strain ATCC 24698 / 74-OR23-1A / CBS 708.71 / DSM 1257 / FGSC 987).